The primary structure comprises 364 residues: Aminomethyltransferase (364 aa).

Belongs to the GcvT family. The glycine cleavage system is composed of four proteins: P, T, L and H.

The catalysed reaction is N(6)-[(R)-S(8)-aminomethyldihydrolipoyl]-L-lysyl-[protein] + (6S)-5,6,7,8-tetrahydrofolate = N(6)-[(R)-dihydrolipoyl]-L-lysyl-[protein] + (6R)-5,10-methylene-5,6,7,8-tetrahydrofolate + NH4(+). In terms of biological role, the glycine cleavage system catalyzes the degradation of glycine. This Anoxybacillus flavithermus (strain DSM 21510 / WK1) protein is Aminomethyltransferase.